Here is a 514-residue protein sequence, read N- to C-terminus: Palmitoyltransferase pfa3 (514 aa).

Residues 1-31 are Cytoplasmic-facing; sequence MATLAMSTPSSPTWPKRRPKAWAMRCERYCC. A helical membrane pass occupies residues 32–52; sequence AAASYFPLAFVYSLTTWAVYV. Residues 53–64 are Lumenal-facing; it reads EASVGLKPSSSS. The chain crosses the membrane as a helical span at residues 65 to 85; that stretch reads WIGLPSSILGVVLYLALNISY. Residues 86 to 174 are Cytoplasmic-facing; it reads TTAVFTDPGS…TCVGLRNYKA (89 aa). One can recognise a DHHC domain in the interval 130 to 180; sequence RFCKKCQCPKPDRAHHCSTCKRCVLKMDHHCPWLATCVGLRNYKAFLLFLI. A helical transmembrane segment spans residues 175-195; that stretch reads FLLFLIYTSLFCWVDFGVSAI. The Lumenal segment spans residues 196–209; that stretch reads WIWTEVFNDTRYMD. The chain crosses the membrane as a helical span at residues 210–230; that stretch reads GILPVNVVLLSILGGIIGLVL. Residues 231 to 514 are Cytoplasmic-facing; it reads TGFTAWHISL…SREDDWRDWD (284 aa). Disordered stretches follow at residues 307–336 and 436–514; these read VTRPEEGEESSDNLTPAQQALSRSYADLER and GNEL…RDWD. Polar residues predominate over residues 318-328; it reads DNLTPAQQALS. Basic and acidic residues predominate over residues 505–514; sequence SREDDWRDWD.

This sequence belongs to the DHHC palmitoyltransferase family. PFA3 subfamily. In terms of processing, autopalmitoylated.

The protein localises to the vacuole membrane. The catalysed reaction is L-cysteinyl-[protein] + hexadecanoyl-CoA = S-hexadecanoyl-L-cysteinyl-[protein] + CoA. Functionally, palmitoyltransferase specific for VAC8. Palmitoylates VAC8 at one or more of its N-terminal cysteine residues, which is required for its proper membrane localization. The chain is Palmitoyltransferase pfa3 (pfa3) from Emericella nidulans (strain FGSC A4 / ATCC 38163 / CBS 112.46 / NRRL 194 / M139) (Aspergillus nidulans).